A 383-amino-acid polypeptide reads, in one-letter code: tRNA-specific 2-thiouridylase MnmA (383 aa).

ATP-binding positions include 10-17 (AMSGGVDS) and methionine 36. Cysteine 107 (nucleophile) is an active-site residue. Cysteine 107 and cysteine 206 form a disulfide bridge. Glycine 131 contributes to the ATP binding site. Positions 155 to 157 (KDQ) are interaction with tRNA. Cysteine 206 functions as the Cysteine persulfide intermediate in the catalytic mechanism. The interval 315 to 316 (RY) is interaction with tRNA.

It belongs to the MnmA/TRMU family.

It localises to the cytoplasm. The enzyme catalyses S-sulfanyl-L-cysteinyl-[protein] + uridine(34) in tRNA + AH2 + ATP = 2-thiouridine(34) in tRNA + L-cysteinyl-[protein] + A + AMP + diphosphate + H(+). Functionally, catalyzes the 2-thiolation of uridine at the wobble position (U34) of tRNA, leading to the formation of s(2)U34. This chain is tRNA-specific 2-thiouridylase MnmA, found in Salinibacter ruber (strain DSM 13855 / M31).